The primary structure comprises 277 residues: uncharacterized protein (277 aa).

2 disordered regions span residues 1–103 (PPLR…LEDP) and 254–277 (PSPSSAPHATSRRPHTQLQVSPPR). A compositionally biased stretch (basic and acidic residues) spans 48–65 (RRNDTGKDRGTHRQRAET). Residues 66–77 (PSRSPVPTTNTV) show a composition bias toward polar residues. Over residues 82–91 (PAVRRQRRTQ) the composition is skewed to basic residues.

This is an uncharacterized protein from Homo sapiens (Human).